The sequence spans 313 residues: DNA-directed RNA polymerase subunit alpha (313 aa).

An alpha N-terminal domain (alpha-NTD) region spans residues 1 to 226 (MLEIEKPKIE…EHLQLFVNLN (226 aa)). The tract at residues 243-313 (KEKLAEMPIE…MGLSLRKEEE (71 aa)) is alpha C-terminal domain (alpha-CTD).

The protein belongs to the RNA polymerase alpha chain family. As to quaternary structure, homodimer. The RNAP catalytic core consists of 2 alpha, 1 beta, 1 beta' and 1 omega subunit. When a sigma factor is associated with the core the holoenzyme is formed, which can initiate transcription.

The enzyme catalyses RNA(n) + a ribonucleoside 5'-triphosphate = RNA(n+1) + diphosphate. Functionally, DNA-dependent RNA polymerase catalyzes the transcription of DNA into RNA using the four ribonucleoside triphosphates as substrates. The chain is DNA-directed RNA polymerase subunit alpha from Carboxydothermus hydrogenoformans (strain ATCC BAA-161 / DSM 6008 / Z-2901).